Reading from the N-terminus, the 700-residue chain is Elongation factor G 2 (700 aa).

Positions 8–290 (ERYRNIGISA…AVVDYLPSPI (283 aa)) constitute a tr-type G domain. GTP-binding positions include 17–24 (AHIDAGKT), 88–92 (DTPGH), and 142–145 (NKMD).

Belongs to the TRAFAC class translation factor GTPase superfamily. Classic translation factor GTPase family. EF-G/EF-2 subfamily.

Its subcellular location is the cytoplasm. Its function is as follows. Catalyzes the GTP-dependent ribosomal translocation step during translation elongation. During this step, the ribosome changes from the pre-translocational (PRE) to the post-translocational (POST) state as the newly formed A-site-bound peptidyl-tRNA and P-site-bound deacylated tRNA move to the P and E sites, respectively. Catalyzes the coordinated movement of the two tRNA molecules, the mRNA and conformational changes in the ribosome. In Ralstonia nicotianae (strain ATCC BAA-1114 / GMI1000) (Ralstonia solanacearum), this protein is Elongation factor G 2 (fusB).